The chain runs to 648 residues: Cysteine-rich receptor-like protein kinase 38 (648 aa).

The first 25 residues, 1 to 25 (MKNSAAIFLTSSLILLLQTLHGVKA), serve as a signal peptide directing secretion. Gnk2-homologous domains are found at residues 26 to 127 (GFIC…DQST) and 140 to 247 (PSPV…FYPF). Over 26–278 (GFICVGSSFP…EAISITRLKG (253 aa)) the chain is Extracellular. N37, N63, N151, N174, and N253 each carry an N-linked (GlcNAc...) asparagine glycan. Residues 279–299 (GIIAIFVVPIVINLLVFIGLI) form a helical membrane-spanning segment. Residues 300-648 (RAYTRIRKSY…ELSITELSPR (349 aa)) are Cytoplasmic-facing. Positions 339 to 611 (FSFENKIGQG…VIQWLGSETI (273 aa)) constitute a Protein kinase domain. Residues 345-353 (IGQGGFGSV) and K367 each bind ATP. Residue Y412 is modified to Phosphotyrosine. The active-site Proton acceptor is D464. At S468 the chain carries Phosphoserine. T504 is subject to Phosphothreonine. Y512 is subject to Phosphotyrosine.

It belongs to the protein kinase superfamily. Ser/Thr protein kinase family. CRK subfamily.

It localises to the membrane. The catalysed reaction is L-seryl-[protein] + ATP = O-phospho-L-seryl-[protein] + ADP + H(+). It carries out the reaction L-threonyl-[protein] + ATP = O-phospho-L-threonyl-[protein] + ADP + H(+). The chain is Cysteine-rich receptor-like protein kinase 38 (CRK38) from Arabidopsis thaliana (Mouse-ear cress).